The primary structure comprises 399 residues: CCA-adding enzyme (399 aa).

ATP is bound by residues Gly28 and Arg31. 2 residues coordinate CTP: Gly28 and Arg31. The Mg(2+) site is built by Asp41 and Asp43. Arg112, Asp155, Arg158, Arg161, and Arg164 together coordinate ATP. The CTP site is built by Arg112, Asp155, Arg158, Arg161, and Arg164.

This sequence belongs to the tRNA nucleotidyltransferase/poly(A) polymerase family. Bacterial CCA-adding enzyme type 3 subfamily. In terms of assembly, homodimer. Mg(2+) is required as a cofactor.

The enzyme catalyses a tRNA precursor + 2 CTP + ATP = a tRNA with a 3' CCA end + 3 diphosphate. It carries out the reaction a tRNA with a 3' CCA end + 2 CTP + ATP = a tRNA with a 3' CCACCA end + 3 diphosphate. Catalyzes the addition and repair of the essential 3'-terminal CCA sequence in tRNAs without using a nucleic acid template. Adds these three nucleotides in the order of C, C, and A to the tRNA nucleotide-73, using CTP and ATP as substrates and producing inorganic pyrophosphate. tRNA 3'-terminal CCA addition is required both for tRNA processing and repair. Also involved in tRNA surveillance by mediating tandem CCA addition to generate a CCACCA at the 3' terminus of unstable tRNAs. While stable tRNAs receive only 3'-terminal CCA, unstable tRNAs are marked with CCACCA and rapidly degraded. This Staphylococcus saprophyticus subsp. saprophyticus (strain ATCC 15305 / DSM 20229 / NCIMB 8711 / NCTC 7292 / S-41) protein is CCA-adding enzyme.